The following is a 289-amino-acid chain: Acetyl-coenzyme A carboxylase carboxyl transferase subunit beta (289 aa).

Residues 27-289 (LWSKCPSCES…SFMRVPAGAA (263 aa)) enclose the CoA carboxyltransferase N-terminal domain. Zn(2+) contacts are provided by Cys-31, Cys-34, Cys-50, and Cys-53. Residues 31–53 (CPSCESVLYRTDLESNSEVCPKC) form a C4-type zinc finger.

Belongs to the AccD/PCCB family. Acetyl-CoA carboxylase is a heterohexamer composed of biotin carboxyl carrier protein (AccB), biotin carboxylase (AccC) and two subunits each of ACCase subunit alpha (AccA) and ACCase subunit beta (AccD). Zn(2+) serves as cofactor.

It localises to the cytoplasm. It catalyses the reaction N(6)-carboxybiotinyl-L-lysyl-[protein] + acetyl-CoA = N(6)-biotinyl-L-lysyl-[protein] + malonyl-CoA. The protein operates within lipid metabolism; malonyl-CoA biosynthesis; malonyl-CoA from acetyl-CoA: step 1/1. In terms of biological role, component of the acetyl coenzyme A carboxylase (ACC) complex. Biotin carboxylase (BC) catalyzes the carboxylation of biotin on its carrier protein (BCCP) and then the CO(2) group is transferred by the transcarboxylase to acetyl-CoA to form malonyl-CoA. This chain is Acetyl-coenzyme A carboxylase carboxyl transferase subunit beta, found in Methylobacillus flagellatus (strain ATCC 51484 / DSM 6875 / VKM B-1610 / KT).